The chain runs to 414 residues: Serine/threonine transporter SstT (414 aa).

At 2 to 15 (TTQRSPGLFRRLAH) the chain is on the cytoplasmic side. A helical transmembrane segment spans residues 16–36 (GSLVKQILVGLVLGILLAWIS). Topologically, residues 37-45 (KPAAEAVGL) are periplasmic. Residues 46–66 (LGTLFVGALKAVAPILVLMLV) form a helical membrane-spanning segment. The Cytoplasmic portion of the chain corresponds to 67–83 (MASIANHQHGQKTNILP). The helical transmembrane segment at 84–104 (ILFLYLLGTFSAALAAVVFSF) threads the bilayer. Residues 105 to 142 (AFPSTLHLSSSAGDISPPSGIVEVMRGLVMSMVSNPID) lie on the Periplasmic side of the membrane. The helical transmembrane segment at 143 to 163 (ALLKGNYIGILVWAIGLGFAL) threads the bilayer. The Cytoplasmic portion of the chain corresponds to 164-179 (RHGNETTKNLVNDMSN). A helical transmembrane segment spans residues 180 to 200 (AVTFMVKLVIRFAPIGIFGLV). The Periplasmic portion of the chain corresponds to 201–217 (SSTLATTGFSTLWGYAQ). A helical membrane pass occupies residues 218–238 (LLVVLVGCMLLVALVVNPLLV). The Cytoplasmic portion of the chain corresponds to 239-299 (WWKIRRNPFP…VSIPLGATIN (61 aa)). Residues 300 to 320 (MAGAAITITVLTLAAVNTLGI) traverse the membrane as a helical segment. Residues 321–331 (PVDLPTALLLS) are Periplasmic-facing. A helical membrane pass occupies residues 332–352 (VVASLCACGASGVAGGSLLLI). Residues 353 to 414 (PLACNMFGIS…DRLANSALRN (62 aa)) are Cytoplasmic-facing.

Belongs to the dicarboxylate/amino acid:cation symporter (DAACS) (TC 2.A.23) family.

Its subcellular location is the cell inner membrane. It catalyses the reaction L-serine(in) + Na(+)(in) = L-serine(out) + Na(+)(out). It carries out the reaction L-threonine(in) + Na(+)(in) = L-threonine(out) + Na(+)(out). Its function is as follows. Involved in the import of serine and threonine into the cell, with the concomitant import of sodium (symport system). The polypeptide is Serine/threonine transporter SstT (Shigella dysenteriae serotype 1 (strain Sd197)).